A 321-amino-acid polypeptide reads, in one-letter code: Sideroflexin-3 (321 aa).

N-acetylmethionine is present on M1. Transmembrane regions (helical) follow at residues L146–L164, L174–L194, I225–V245, and L266–F286.

It belongs to the sideroflexin family.

It is found in the mitochondrion membrane. It carries out the reaction L-serine(in) = L-serine(out). Its function is as follows. Mitochondrial serine transporter that mediates transport of serine into mitochondria, an important step of the one-carbon metabolism pathway. Mitochondrial serine is converted to glycine and formate, which then exits to the cytosol where it is used to generate the charged folates that serve as one-carbon donors. The chain is Sideroflexin-3 (Sfxn3) from Rattus norvegicus (Rat).